A 693-amino-acid polypeptide reads, in one-letter code: Elongation factor G (693 aa).

Residues 8–284 form the tr-type G domain; it reads HMVRNIGIAA…AVIDYLPAPD (277 aa). Residues 17–24, 81–85, and 135–138 contribute to the GTP site; these read AHIDAGKT, DTPGH, and NKMD.

Belongs to the TRAFAC class translation factor GTPase superfamily. Classic translation factor GTPase family. EF-G/EF-2 subfamily.

It is found in the cytoplasm. Its function is as follows. Catalyzes the GTP-dependent ribosomal translocation step during translation elongation. During this step, the ribosome changes from the pre-translocational (PRE) to the post-translocational (POST) state as the newly formed A-site-bound peptidyl-tRNA and P-site-bound deacylated tRNA move to the P and E sites, respectively. Catalyzes the coordinated movement of the two tRNA molecules, the mRNA and conformational changes in the ribosome. The sequence is that of Elongation factor G from Nautilia profundicola (strain ATCC BAA-1463 / DSM 18972 / AmH).